The sequence spans 157 residues: Transcriptional repressor NrdR (157 aa).

The segment at 3 to 34 (CPHCHQNSSRVIDSRPTDEGRVIRRRRECENC) is a zinc-finger region. An ATP-cone domain is found at 49–139 (LLVIKKNGTR…VYRQFKDMNV (91 aa)).

The protein belongs to the NrdR family. Zn(2+) serves as cofactor.

Functionally, negatively regulates transcription of bacterial ribonucleotide reductase nrd genes and operons by binding to NrdR-boxes. The protein is Transcriptional repressor NrdR of Latilactobacillus sakei subsp. sakei (strain 23K) (Lactobacillus sakei subsp. sakei).